Reading from the N-terminus, the 1496-residue chain is Synaptojanin-2 (1496 aa).

Residues 120–444 enclose the SAC domain; the sequence is LKKILSSGVF…GHGLSKVFTG (325 aa). Residues 906–985 form the RRM domain; that stretch reads DATVIVNLQS…RAVKIRPKTK (80 aa). 6 disordered regions span residues 1047-1083, 1100-1149, 1205-1357, 1393-1413, 1442-1461, and 1468-1496; these read VVSDSELGGDDSSDTMSASTPASKSPALAKKKQHPTY, GNFR…GTHG, VPES…LQVL, SSAISPETDGPRVTEPEAASF, EPLDLGSRTPERTHTDSAQV, and RGLPPDHGGKDFSHWMAASNKDKRTTLGV. The span at 1063-1074 shows a compositional bias: low complexity; it reads SASTPASKSPAL. Over residues 1116 to 1130 the composition is skewed to pro residues; it reads RPRPPHPPQRPPPPT. Ser1139 carries the phosphoserine modification. Residues 1139–1149 are compositionally biased toward polar residues; that stretch reads SDASISSGTHG. Pro residues-rich tracts occupy residues 1230-1239 and 1279-1292; these read PVLPRRPVPR and TPPPITAPIPPVPK. Residues 1324–1338 are compositionally biased toward low complexity; it reads ELSSPEAPEAPSLAP. Composition is skewed to basic and acidic residues over residues 1470–1480 and 1487–1496; these read LPPDHGGKDFS and NKDKRTTLGV.

The protein belongs to the synaptojanin family. This sequence in the central section; belongs to the inositol 1,4,5-trisphosphate 5-phosphatase family. As to quaternary structure, binds to GRB2. Isoform 2A binds to SYNJ2BP/OMP25. As to expression, widely expressed. Isoforms 2B1 and 2B2 are concentrated at nerve terminals in brain and at spermatid manchette in testis.

It localises to the cytoplasm. Its subcellular location is the cell membrane. It is found in the presynapse. The protein localises to the cytoskeleton. The protein resides in the membrane raft. It localises to the mitochondrion. It carries out the reaction a 1,2-diacyl-sn-glycero-3-phospho-(1D-myo-inositol-4,5-bisphosphate) + H2O = a 1,2-diacyl-sn-glycero-3-phospho-(1D-myo-inositol 4-phosphate) + phosphate. In terms of biological role, inositol 5-phosphatase which may be involved in distinct membrane trafficking and signal transduction pathways. May mediate the inhibitory effect of Rac1 on endocytosis. The chain is Synaptojanin-2 (Synj2) from Rattus norvegicus (Rat).